The chain runs to 521 residues: RING-type E3 ubiquitin-protein ligase PPIL2 (521 aa).

The region spanning 35-108 (RRLPFDHCSL…GQYHCPVLYS (74 aa)) is the U-box domain. A coiled-coil region spans residues 197-217 (LKNTNSETRETLQELYKEFKG). Lys-216 participates in a covalent cross-link: Glycyl lysine isopeptide (Lys-Gly) (interchain with G-Cter in SUMO2). The PPIase cyclophilin-type domain occupies 278-433 (KKGYVRLHTN…EEVLICTTTV (156 aa)). A compositionally biased stretch (basic and acidic residues) spans 447-462 (QERKKTQHQVDPEAKV). Residues 447–521 (QERKKTQHQV…SRGFGDFSSW (75 aa)) are disordered. The span at 465-478 (SQPQPGNQGPQTYR) shows a compositional bias: polar residues. At Lys-483 the chain carries N6-acetyllysine.

This sequence belongs to the cyclophilin-type PPIase family. PPIL2 subfamily. Component of the minor spliceosome, which splices U12-type introns. Within this complex, interacts with PRPF8/PRP8, EFTUD2/SNU114 and PLRG1. Interacts with isoform 2 of BSG. Interacts (via the PPIase cyclophilin-type domain) with CRNKL1; they may form a trimeric complex with HSP90.

It is found in the nucleus. The enzyme catalyses S-ubiquitinyl-[E2 ubiquitin-conjugating enzyme]-L-cysteine + [acceptor protein]-L-lysine = [E2 ubiquitin-conjugating enzyme]-L-cysteine + N(6)-ubiquitinyl-[acceptor protein]-L-lysine.. The protein operates within protein modification; protein ubiquitination. Has a ubiquitin-protein ligase activity acting as an E3 ubiquitin protein ligase or as an ubiquitin-ubiquitin ligase promoting elongation of ubiquitin chains on substrates. By mediating 'Lys-48'-linked polyubiquitination of proteins could target them for proteasomal degradation. May also function as a chaperone, playing a role in transport to the cell membrane of BSG/Basigin for instance. Probable inactive PPIase with no peptidyl-prolyl cis-trans isomerase activity. As a component of the minor spliceosome, involved in the splicing of U12-type introns in pre-mRNAs. This is RING-type E3 ubiquitin-protein ligase PPIL2 from Mus musculus (Mouse).